The chain runs to 201 residues: uncharacterized protein (201 aa).

The first 23 residues, 1–23 (MKILYFIFVIIINILLILNHVKS), serve as a signal peptide directing secretion. The Extracellular portion of the chain corresponds to 24 to 178 (KYNTFIFENT…GNYGEDPQRN (155 aa)). N-linked (GlcNAc...) asparagine glycosylation is found at Asn-114 and Asn-134. A disordered region spans residues 122–157 (TPETPSPTENAPNTSGGSSEGNHYTYKSSSSSSEHI). A compositionally biased stretch (polar residues) spans 123–148 (PETPSPTENAPNTSGGSSEGNHYTYK). The helical transmembrane segment at 179 to 199 (IGISLSSSLIFISILFLIIFI) threads the bilayer. The Cytoplasmic segment spans residues 200–201 (NN).

It is found in the membrane. This is an uncharacterized protein from Dictyostelium discoideum (Social amoeba).